The chain runs to 202 residues: Large ribosomal subunit protein bL25 (202 aa).

This sequence belongs to the bacterial ribosomal protein bL25 family. CTC subfamily. In terms of assembly, part of the 50S ribosomal subunit; part of the 5S rRNA/L5/L18/L25 subcomplex. Contacts the 5S rRNA. Binds to the 5S rRNA independently of L5 and L18.

This is one of the proteins that binds to the 5S RNA in the ribosome where it forms part of the central protuberance. The protein is Large ribosomal subunit protein bL25 of Paramagnetospirillum magneticum (strain ATCC 700264 / AMB-1) (Magnetospirillum magneticum).